Consider the following 385-residue polypeptide: 8-amino-7-oxononanoate synthase (385 aa).

Arg21 serves as a coordination point for substrate. Residue 108–109 (GF) coordinates pyridoxal 5'-phosphate. His133 is a substrate binding site. 3 residues coordinate pyridoxal 5'-phosphate: Ser179, His207, and Thr233. N6-(pyridoxal phosphate)lysine is present on Lys236. Position 352 (Thr352) interacts with substrate.

Belongs to the class-II pyridoxal-phosphate-dependent aminotransferase family. BioF subfamily. In terms of assembly, homodimer. It depends on pyridoxal 5'-phosphate as a cofactor.

It carries out the reaction 6-carboxyhexanoyl-[ACP] + L-alanine + H(+) = (8S)-8-amino-7-oxononanoate + holo-[ACP] + CO2. It participates in cofactor biosynthesis; biotin biosynthesis. In terms of biological role, catalyzes the decarboxylative condensation of pimeloyl-[acyl-carrier protein] and L-alanine to produce 8-amino-7-oxononanoate (AON), [acyl-carrier protein], and carbon dioxide. The polypeptide is 8-amino-7-oxononanoate synthase (Salmonella schwarzengrund (strain CVM19633)).